A 155-amino-acid chain; its full sequence is Small ribosomal subunit protein uS7 (155 aa).

This sequence belongs to the universal ribosomal protein uS7 family. Part of the 30S ribosomal subunit. Contacts proteins S9 and S11.

One of the primary rRNA binding proteins, it binds directly to 16S rRNA where it nucleates assembly of the head domain of the 30S subunit. Is located at the subunit interface close to the decoding center, probably blocks exit of the E-site tRNA. The polypeptide is Small ribosomal subunit protein uS7 (Mycoplasma mycoides subsp. mycoides SC (strain CCUG 32753 / NCTC 10114 / PG1)).